A 1007-amino-acid chain; its full sequence is Probable inorganic carbon transporter subunit DabA (1007 aa).

Residues Cys442, Asp444, His696, and Cys711 each contribute to the Zn(2+) site.

Belongs to the inorganic carbon transporter (TC 9.A.2) DabA family. As to quaternary structure, forms a complex with DabB. Zn(2+) is required as a cofactor.

The protein localises to the cell inner membrane. Its function is as follows. Part of an energy-coupled inorganic carbon pump. This is Probable inorganic carbon transporter subunit DabA from Aquifex aeolicus (strain VF5).